The chain runs to 265 residues: Phosphonoacetaldehyde hydrolase (265 aa).

The active-site Nucleophile is the Asp-9. Residues Asp-9 and Ala-11 each coordinate Mg(2+). The active-site Schiff-base intermediate with substrate is Lys-50. Asp-184 contributes to the Mg(2+) binding site.

It belongs to the HAD-like hydrolase superfamily. PhnX family. In terms of assembly, homodimer. The cofactor is Mg(2+).

The catalysed reaction is phosphonoacetaldehyde + H2O = acetaldehyde + phosphate + H(+). In terms of biological role, involved in phosphonate degradation. The chain is Phosphonoacetaldehyde hydrolase from Lactiplantibacillus plantarum (strain ATCC BAA-793 / NCIMB 8826 / WCFS1) (Lactobacillus plantarum).